The chain runs to 215 residues: High mobility group protein B1 (215 aa).

1–10 (MGKGDPKKPR) is a heparin binding site. Positions 1–97 (MGKGDPKKPR…KFKDPNAPKR (97 aa)) are sufficient for interaction with HAVCR2. Lys-3, Lys-7, Lys-8, and Lys-12 each carry N6-acetyllysine. The interval 3–15 (KGDPKKPRGKMSS) is LPS binding (delipidated). A DNA-binding region (HMG box 1) is located at residues 9–79 (PRGKMSSYAF…RYEREMKTYI (71 aa)). Cys-23 is subject to Cysteine sulfonic acid (-SO3H); alternate. Cys-23 and Cys-45 are disulfide-bonded. Positions 27–43 (HKKKHPDASVNFSEFSK) are NLS 1. Residues 27–43 (HKKKHPDASVNFSEFSK) carry the Nuclear localization signal (NLS) 1 motif. 3 positions are modified to N6-acetyllysine: Lys-28, Lys-29, and Lys-30. Lys-28 is covalently cross-linked (Isoglutamyl lysine isopeptide (Lys-Gln) (interchain with Q-?)). Ser-35 carries the post-translational modification Phosphoserine. At Lys-43 the chain carries N6-acetyllysine. Isoglutamyl lysine isopeptide (Lys-Gln) (interchain with Q-?) cross-links involve residues Lys-43 and Lys-44. Cysteine sulfonic acid (-SO3H); alternate is present on Cys-45. Residue Lys-68 forms an Isoglutamyl lysine isopeptide (Lys-Gln) (interchain with Q-?) linkage. The tract at residues 76–95 (KTYIPPKGETKKKFKDPNAP) is disordered. Residues 80–96 (PPKGETKKKFKDPNAPK) are LPS binding (Lipid A). Positions 83-94 (GETKKKFKDPNA) are enriched in basic and acidic residues. The segment at 89–108 (FKDPNAPKRPPSAFFLFCSE) is cytokine-stimulating activity. Lys-90 carries the post-translational modification N6-acetyllysine. The HMG box 2 DNA-binding region spans 95–163 (PKRPPSAFFL…KYEKDIAAYR (69 aa)). Position 100 is a phosphoserine (Ser-100). Cys-106 is modified (cysteine sulfonic acid (-SO3H)). Residues Lys-127, Lys-128, Lys-141, Lys-172, Lys-173, Lys-177, and Lys-180 each carry the N6-acetyllysine modification. The interval 150–183 (KLKEKYEKDIAAYRAKGKPDAAKKGVVKAEKSKK) is binding to AGER/RAGE. Over residues 161–179 (AYRAKGKPDAAKKGVVKAE) the composition is skewed to basic and acidic residues. The interval 161-215 (AYRAKGKPDAAKKGVVKAEKSKKKKEEEEDEEDEEDEEEEEDEEDEDEEEDDDDE) is disordered. An NLS 2 region spans residues 178 to 184 (AEKSKKK). Residues 178-184 (AEKSKKK) carry the Nuclear localization signal (NLS) 2 motif. Lys-180 is covalently cross-linked (Isoglutamyl lysine isopeptide (Lys-Gln) (interchain with Q-?)). Position 181 is an ADP-ribosylserine (Ser-181). Lys-182, Lys-183, Lys-184, and Lys-185 each carry N6-acetyllysine. Residues Lys-182, Lys-183, and Lys-184 each participate in an isoglutamyl lysine isopeptide (Lys-Gln) (interchain with Q-?) cross-link. Positions 187-215 (EEEDEEDEEDEEEEEDEEDEDEEEDDDDE) are enriched in acidic residues.

The protein belongs to the HMGB family. As to quaternary structure, interacts (fully reduced HMGB1) with CXCL12; probably in a 1:2 ratio involving two molecules of CXCL12, each interacting with one HMG box of HMGB1; inhibited by glycyrrhizin. Associates with the TLR4:LY96 receptor complex. Component of the RAG complex composed of core components RAG1 and RAG2, and associated component HMGB1 or HMGB2. Interacts (in cytoplasm upon starvation) with BECN1; inhibits the interaction of BECN1 and BCL2 leading to promotion of autophagy. Interacts with KPNA1; involved in nuclear import. Interacts with SREBF1, TLR2, TLR4, TLR9, PTPRZ1, APEX1, FEN1, POLB, TERT. Interacts with IL1B, AGER, MSH2, XPA, XPC, HNF1A, TP53. Interacts with CD24; the probable CD24:SIGLEC10 complex is proposed to inhibit HGMB1-mediated tissue damage immune response. Interacts with THBD; prevents HGMB1 interaction with ACER/RAGE and inhibits HGMB1 pro-inflammatory activity. Interacts with HAVCR2; impairs HMGB1 binding to B-DNA and likely HMGB1-mediated innate immune response. Interacts with XPO1; mediating nuclear export. Interacts with receptor RAGE/AGER. Post-translationally, phosphorylated at serine residues. Phosphorylation in both NLS regions is required for cytoplasmic translocation followed by secretion. In terms of processing, acetylated on multiple sites upon stimulation with LPS. Acetylation on lysine residues in the nuclear localization signals (NLS 1 and NLS 2) leads to cytoplasmic localization and subsequent secretion. Acetylation on Lys-3 results in preferential binding to DNA ends and impairs DNA bending activity. Reduction/oxidation of cysteine residues Cys-23, Cys-45 and Cys-106 and a possible intramolecular disulfide bond involving Cys-23 and Cys-45 give rise to different redox forms with specific functional activities in various cellular compartments: 1- fully reduced HMGB1 (HMGB1C23hC45hC106h), 2- disulfide HMGB1 (HMGB1C23-C45C106h) and 3- sulfonyl HMGB1 (HMGB1C23soC45soC106so). Post-translationally, poly-ADP-ribosylated by PARP1 when secreted following stimulation with LPS. In terms of processing, in vitro cleavage by CASP1 is liberating a HMG box 1-containing peptide which may mediate immunogenic activity; the peptide antagonizes apoptosis-induced immune tolerance. Can be proteolytically cleaved by a thrombin:thrombomodulin complex; reduces binding to heparin and pro-inflammatory activities. Forms covalent cross-links mediated by transglutaminase TGM2, between a glutamine and the epsilon-amino group of a lysine residue, forming homopolymers and heteropolymers.

The protein resides in the nucleus. It is found in the chromosome. The protein localises to the cytoplasm. Its subcellular location is the secreted. It localises to the cell membrane. The protein resides in the endosome. It is found in the endoplasmic reticulum-Golgi intermediate compartment. Multifunctional redox sensitive protein with various roles in different cellular compartments. In the nucleus is one of the major chromatin-associated non-histone proteins and acts as a DNA chaperone involved in replication, transcription, chromatin remodeling, V(D)J recombination, DNA repair and genome stability. Proposed to be an universal biosensor for nucleic acids. Promotes host inflammatory response to sterile and infectious signals and is involved in the coordination and integration of innate and adaptive immune responses. In the cytoplasm functions as a sensor and/or chaperone for immunogenic nucleic acids implicating the activation of TLR9-mediated immune responses, and mediates autophagy. Acts as a danger-associated molecular pattern (DAMP) molecule that amplifies immune responses during tissue injury. Released to the extracellular environment can bind DNA, nucleosomes, IL-1 beta, CXCL12, AGER isoform 2/sRAGE, lipopolysaccharide (LPS) and lipoteichoic acid (LTA), and activates cells through engagement of multiple surface receptors. In the extracellular compartment fully reduced HMGB1 (released by necrosis) acts as a chemokine, disulfide HMGB1 (actively secreted) as a cytokine, and sulfonyl HMGB1 (released from apoptotic cells) promotes immunological tolerance. Has proangiogenic activity. May be involved in platelet activation. Binds to phosphatidylserine and phosphatidylethanolamide. Bound to RAGE mediates signaling for neuronal outgrowth. May play a role in accumulation of expanded polyglutamine (polyQ) proteins. Functionally, nuclear functions are attributed to fully reduced HGMB1. Associates with chromatin and binds DNA with a preference to non-canonical DNA structures such as single-stranded DNA, DNA-containing cruciforms or bent structures, supercoiled DNA and ZDNA. Can bent DNA and enhance DNA flexibility by looping thus providing a mechanism to promote activities on various gene promoters by enhancing transcription factor binding and/or bringing distant regulatory sequences into close proximity. May be involved in nucleotide excision repair (NER), mismatch repair (MMR) and base excision repair (BER) pathways, and double strand break repair such as non-homologous end joining (NHEJ). Involved in V(D)J recombination by acting as a cofactor of the RAG complex: acts by stimulating cleavage and RAG protein binding at the 23 bp spacer of conserved recombination signal sequences (RSS). In vitro can displace histone H1 from highly bent DNA. Can restructure the canonical nucleosome leading to relaxation of structural constraints for transcription factor-binding. Enhances binding of sterol regulatory element-binding proteins (SREBPs) such as SREBF1 to their cognate DNA sequences and increases their transcriptional activities. Facilitates binding of TP53 to DNA. May be involved in mitochondrial quality control and autophagy in a transcription-dependent fashion implicating HSPB1. Can modulate the activity of the telomerase complex and may be involved in telomere maintenance. In terms of biological role, in the cytoplasm proposed to dissociate the BECN1:BCL2 complex via competitive interaction with BECN1 leading to autophagy activation. Can protect BECN1 and ATG5 from calpain-mediated cleavage and thus proposed to control their proautophagic and proapoptotic functions and to regulate the extent and severity of inflammation-associated cellular injury. In myeloid cells has a protective role against endotoxemia and bacterial infection by promoting autophagy. Involved in endosomal translocation and activation of TLR9 in response to CpG-DNA in macrophages. Its function is as follows. In the extracellular compartment (following either active secretion or passive release) involved in regulation of the inflammatory response. Fully reduced HGMB1 (which subsequently gets oxidized after release) in association with CXCL12 mediates the recruitment of inflammatory cells during the initial phase of tissue injury; the CXCL12:HMGB1 complex triggers CXCR4 homodimerization. Induces the migration of monocyte-derived immature dendritic cells and seems to regulate adhesive and migratory functions of neutrophils implicating AGER/RAGE and ITGAM. Can bind to various types of DNA and RNA including microbial unmethylated CpG-DNA to enhance the innate immune response to nucleic acids. Proposed to act in promiscuous DNA/RNA sensing which cooperates with subsequent discriminative sensing by specific pattern recognition receptors. Promotes extracellular DNA-induced AIM2 inflammasome activation implicating AGER/RAGE. Disulfide HMGB1 binds to transmembrane receptors, such as AGER/RAGE, TLR2, TLR4 and probably TREM1, thus activating their signal transduction pathways. Mediates the release of cytokines/chemokines such as TNF, IL-1, IL-6, IL-8, CCL2, CCL3, CCL4 and CXCL10. Promotes secretion of interferon-gamma by macrophage-stimulated natural killer (NK) cells in concert with other cytokines like IL-2 or IL-12. TLR4 is proposed to be the primary receptor promoting macrophage activation and signaling through TLR4 seems to implicate LY96/MD-2. In bacterial LPS- or LTA-mediated inflammatory responses binds to the endotoxins and transfers them to CD14 for signaling to the respective TLR4:LY96 and TLR2 complexes. Contributes to tumor proliferation by association with ACER/RAGE. Can bind to IL1-beta and signals through the IL1R1:IL1RAP receptor complex. Binding to class A CpG activates cytokine production in plasmacytoid dendritic cells implicating TLR9, MYD88 and AGER/RAGE and can activate autoreactive B cells. Via HMGB1-containing chromatin immune complexes may also promote B cell responses to endogenous TLR9 ligands through a B-cell receptor (BCR)-dependent and ACER/RAGE-independent mechanism. Inhibits phagocytosis of apoptotic cells by macrophages; the function is dependent on poly-ADP-ribosylation and involves binding to phosphatidylserine on the cell surface of apoptotic cells. In adaptive immunity may be involved in enhancing immunity through activation of effector T-cells and suppression of regulatory T (TReg) cells. In contrast, without implicating effector or regulatory T-cells, required for tumor infiltration and activation of T-cells expressing the lymphotoxin LTA:LTB heterotrimer thus promoting tumor malignant progression. Also reported to limit proliferation of T-cells. Released HMGB1:nucleosome complexes formed during apoptosis can signal through TLR2 to induce cytokine production. Involved in induction of immunological tolerance by apoptotic cells; its pro-inflammatory activities when released by apoptotic cells are neutralized by reactive oxygen species (ROS)-dependent oxidation specifically on Cys-106. During macrophage activation by activated lymphocyte-derived self apoptotic DNA (ALD-DNA) promotes recruitment of ALD-DNA to endosomes. The chain is High mobility group protein B1 (HMGB1) from Canis lupus familiaris (Dog).